Reading from the N-terminus, the 395-residue chain is Cyclomarin C epoxidase CymV (395 aa).

Belongs to the cytochrome P450 family.

Its function is as follows. Cytochrome P450; part of the gene cluster that mediates the biosynthesis of cyclic heptapeptides, known as cyclomarins and also of cyclic dipeptides, called cyclomarazines, which have both antimicrobial and cytotoxic effects. First, CymD catalyzes the reverse N-prenylation of monomeric L-tryptophan with dimethylallyl diphosphate (DMAPP) to form N-(1,1-dimethylallyl)-tryptophan (r-N-DMAT). The N-(1,1-dimethylallyl)-tryptophan produced by CymD is then combined with a range of standard and nonproteinogenic amino acid substrates to synthesize the peptides, a process that is probably catalyzed by the non-canonical nonribosomal peptide synthetase (NRPS), CymA. Other proteins in the cluster catalyze further modifications of the peptides including CymV which catalyzes the oxidation of olefinic cyclomarins and cyclomarazines to their respective epoxide derivatives. The polypeptide is Cyclomarin C epoxidase CymV (Salinispora arenicola (strain CNS-205)).